The following is a 95-amino-acid chain: Aspartyl/glutamyl-tRNA(Asn/Gln) amidotransferase subunit C (95 aa).

It belongs to the GatC family. As to quaternary structure, heterotrimer of A, B and C subunits.

The catalysed reaction is L-glutamyl-tRNA(Gln) + L-glutamine + ATP + H2O = L-glutaminyl-tRNA(Gln) + L-glutamate + ADP + phosphate + H(+). The enzyme catalyses L-aspartyl-tRNA(Asn) + L-glutamine + ATP + H2O = L-asparaginyl-tRNA(Asn) + L-glutamate + ADP + phosphate + 2 H(+). Functionally, allows the formation of correctly charged Asn-tRNA(Asn) or Gln-tRNA(Gln) through the transamidation of misacylated Asp-tRNA(Asn) or Glu-tRNA(Gln) in organisms which lack either or both of asparaginyl-tRNA or glutaminyl-tRNA synthetases. The reaction takes place in the presence of glutamine and ATP through an activated phospho-Asp-tRNA(Asn) or phospho-Glu-tRNA(Gln). This is Aspartyl/glutamyl-tRNA(Asn/Gln) amidotransferase subunit C from Ectopseudomonas mendocina (strain ymp) (Pseudomonas mendocina).